Consider the following 242-residue polypeptide: GDSL esterase/lipase At5g62930 (242 aa).

Ser-11 acts as the Nucleophile in catalysis. The segment at 223-242 is disordered; that stretch reads PHHSHIDGKNPSKAFEERCL.

This sequence belongs to the 'GDSL' lipolytic enzyme family.

The chain is GDSL esterase/lipase At5g62930 from Arabidopsis thaliana (Mouse-ear cress).